The following is a 188-amino-acid chain: dCTP deaminase (188 aa).

DCTP is bound at residue 107 to 112; it reads KSTYAR. The active-site Proton donor/acceptor is the Glu-133. The dCTP site is built by Gln-152, Tyr-166, and Gln-176.

Belongs to the dCTP deaminase family. As to quaternary structure, homotrimer.

The catalysed reaction is dCTP + H2O + H(+) = dUTP + NH4(+). Its pathway is pyrimidine metabolism; dUMP biosynthesis; dUMP from dCTP (dUTP route): step 1/2. In terms of biological role, catalyzes the deamination of dCTP to dUTP. The chain is dCTP deaminase from Sulfurovum sp. (strain NBC37-1).